The following is a 222-amino-acid chain: Probable transcriptional regulator ycf29 (222 aa).

The region spanning 4–120 is the Response regulatory domain; it reads KLMLVENDIV…ELLSIINNLI (117 aa). Position 53 is a 4-aspartylphosphate (Asp-53). The region spanning 139–204 is the HTH luxR-type domain; sequence QLNHKIRLTP…LLVKYSINNN (66 aa). Residues 163 to 182 constitute a DNA-binding region (H-T-H motif); the sequence is NKEISTILNTSVRNVEKYVS.

It localises to the plastid. The protein localises to the chloroplast. The chain is Probable transcriptional regulator ycf29 (ycf29) from Pyropia yezoensis (Susabi-nori).